The sequence spans 98 residues: Protein translation factor SUI1 homolog (98 aa).

The protein belongs to the SUI1 family.

The protein is Protein translation factor SUI1 homolog of Pyrococcus furiosus (strain ATCC 43587 / DSM 3638 / JCM 8422 / Vc1).